The chain runs to 201 residues: Ras-related protein Rab-1B (201 aa).

The residue at position 1 (methionine 1) is an N-acetylmethionine. 13 residues coordinate GTP: serine 17, glycine 18, valine 19, glycine 20, lysine 21, serine 22, cysteine 23, tyrosine 33, threonine 34, glutamate 35, serine 36, serine 39, and threonine 40. Residue serine 22 participates in Mg(2+) binding. A Switch 1 motif is present at residues 30 to 45; sequence DDTYTESYISTIGVDF. Mg(2+) contacts are provided by threonine 40 and aspartate 63. The tract at residues 64–83 is switch 2 region; required for interaction with REP1/CHM; sequence TAGQERFRTVTSSYYRGAHG. A Switch 2 motif is present at residues 65–80; sequence AGQERFRTVTSSYYRG. GTP-binding residues include glycine 66, asparagine 121, lysine 122, aspartate 124, serine 151, alanine 152, and lysine 153. Residues 173-201 are disordered; it reads MGPGAASGGERPNLKIDSTPVKSASGGCC. Residues cysteine 200 and cysteine 201 are each lipidated (S-geranylgeranyl cysteine). Residue cysteine 201 is modified to Cysteine methyl ester.

Belongs to the small GTPase superfamily. Rab family. Interacts with MICAL1 and MICAL2. Interacts (in GTP-bound form) with MICALCL, MICAL1 and MILCAL3. Interacts with GDI1; the interaction requires the GDP-bound state. Interacts with CHM/REP1; the interaction requires the GDP-bound form and is necessary for prenylation by GGTase II. Interacts with RabGAP TBC1D20. Interacts (in GDP-bound form) with lipid phosphatase MTMR6 (via GRAM domain); the interaction regulates MTMR6 recruitment to the endoplasmic reticulum-Golgi intermediate compartment. Interacts (in GDP-bound form) with lipid phosphatase MTMR7. The cofactor is Mg(2+). In terms of processing, prenylated; by GGTase II, only after interaction of the substrate with Rab escort protein 1 (REP1).

It localises to the cytoplasm. The protein localises to the membrane. The protein resides in the preautophagosomal structure membrane. It is found in the perinuclear region. It carries out the reaction GTP + H2O = GDP + phosphate + H(+). Its activity is regulated as follows. Regulated by guanine nucleotide exchange factors (GEFs) which promote the exchange of bound GDP for free GTP. Regulated by GTPase activating proteins (GAPs) including TBC1D20 which increases the GTP hydrolysis activity. Inhibited by GDP dissociation inhibitors (GDIs). Its function is as follows. The small GTPases Rab are key regulators of intracellular membrane trafficking, from the formation of transport vesicles to their fusion with membranes. Rabs cycle between an inactive GDP-bound form and an active GTP-bound form that is able to recruit to membranes different set of downstream effectors directly responsible for vesicle formation, movement, tethering and fusion. Plays a role in the initial events of the autophagic vacuole development which take place at specialized regions of the endoplasmic reticulum. Regulates vesicular transport between the endoplasmic reticulum and successive Golgi compartments. Required to modulate the compacted morphology of the Golgi. Promotes the recruitment of lipid phosphatase MTMR6 to the endoplasmic reticulum-Golgi intermediate compartment. This Rattus norvegicus (Rat) protein is Ras-related protein Rab-1B (Rab1b).